A 366-amino-acid chain; its full sequence is tRNA(Met) cytidine acetate ligase (366 aa).

ATP-binding positions include 7–20, Gly96, Asn152, and Arg175; that span reads VAEF…HKYL.

The protein belongs to the TmcAL family.

It is found in the cytoplasm. The catalysed reaction is cytidine(34) in elongator tRNA(Met) + acetate + ATP = N(4)-acetylcytidine(34) in elongator tRNA(Met) + AMP + diphosphate. Catalyzes the formation of N(4)-acetylcytidine (ac(4)C) at the wobble position of elongator tRNA(Met), using acetate and ATP as substrates. First activates an acetate ion to form acetyladenylate (Ac-AMP) and then transfers the acetyl group to tRNA to form ac(4)C34. This Streptococcus uberis (strain ATCC BAA-854 / 0140J) protein is tRNA(Met) cytidine acetate ligase.